Consider the following 1081-residue polypeptide: MDIRKEKRLNMALQMSNFKKALNRFEKLVEQTAAQKRDERAGLFIHKEDAIGYDKFYASVQKLFGPDVKNQDVKRFYRKLCNNTDASADWCEIFGYFSSEEDPIASQLDEENLVFFVSRKRRILISGSRRRDVIKSIVKIPHLDLLITATQKGLITVFNNQDTSWITGCDYLLQLKRIVATTERTIIVWDYKAQGSSQENYFVIKPMDHCLLCVCVVPLPDHLCRDDILLGDDGGFVNRFTVNSDDFGIKQAKSKRKLQNQVLDSKNFKSVKRKLHNDWVMKIRYISALNCFGSCSLDSNHSLVLESLKRLEDNLPVREFSMPRGANTFCYCVKANVIVTGGDDKVIRLWHPNISTKPVGKLVGHMFSIAEIVTNEKDQHVVSLSSAKVFRVWDIQTLSLLQVFHDSQGGPGDMQIYSMIYDANHGMLITGSSVMDMYPLTRMIQDTKQVPHTHEREINVMLYNKYFHQVLTICSESIIRVWELETGLQVYQILEPHGFNTEVTSAAVDESGFLFATGAYNGTVRIWDFGSGQEMKVLPEGKDWKEDEHCLRRLIFLKAQEKHQQLVLALERNGTIKMIQGKEDDIYLMVIWELPDVVPFLQDGKHAVHLRMSTRDRNMAIPFPDVELIVERNFSQPTDNPTMDLLRVNCIDLLQVEGYNLIAAGTLNGVIILWNFVTSTVKKVYRPEDCFTVNPDLHPKHFKINDILFLFRTPECARRSSQDSICSSSQCESSKGPQSSKGSKQSIHDSEVKGEQTDVMVGKQQPMDKKHPGIANLPEAQPPILVTAHEDGHLRLWTLEGRLLKDMLPFTKHSAISLTSLYTDSCTRILLAGNVEGHVILCNISSFLDPPHDEKKFKQLLSWRAHSLEIIQVIYVEEKQVVLTASIDGSVRLWHALNGHYCGYFGQRRLFELSQTRDFILPCDVTEYPIEIKEESKFTEKQKYEYPLIFDREKWRKMSSVSLLFKRTPPKAFEVEQDFKFFKSLSSPKIRRYPLEGFVTENREAGIVFGSLPIYSISSPTSLRFLPLIGVEAQKDSSDGITGKKKGGHVQREKAPRRRSLKKNLVPQINLASSFFPAIPK.

WD repeat units lie at residues 102-152 (DPIA…ATQK), 153-198 (GLIT…GSSQ), 199-265 (ENYF…VLDS), 266-314 (KNFK…LEDN), 315-356 (LPVR…NIST), 357-400 (KPVG…TLSL), 401-444 (LQVF…TRMI), 445-488 (QDTK…ETGL), 489-532 (QVYQ…FGSG), 533-631 (QEMK…LIVE), 632-740 (RNFS…PQSS), 741-803 (KGSK…EGRL), 804-857 (LKDM…EKKF), and 858-895 (KQLLSWRAHSLEIIQVIYVEEKQVVLTASIDGSVRLWH). The segment covering 726 to 745 (CSSSQCESSKGPQSSKGSKQ) has biased composition (low complexity). Residues 726 to 757 (CSSSQCESSKGPQSSKGSKQSIHDSEVKGEQT) form a disordered region. Over residues 746–756 (SIHDSEVKGEQ) the composition is skewed to basic and acidic residues. The disordered stretch occupies residues 1036–1060 (DSSDGITGKKKGGHVQREKAPRRRS). A compositionally biased stretch (basic residues) spans 1043 to 1060 (GKKKGGHVQREKAPRRRS).

The sequence is that of WD repeat-containing protein 64 (WDR64) from Homo sapiens (Human).